We begin with the raw amino-acid sequence, 453 residues long: MLIHPEEILETIKMVTNEHLDIRTVTMGINLRGCSHPDIKVFNEQVYTRIMRCAEKLVATTEDIQNLYGIPIINKRISVTPIAIVAEACQEEDLSSVAEALDRAAQETGIDFIGGFSALVQKGMTPGDLSLINSIPQALASTKKVCSSVNVATTKAGINMDAVAKMGHIIKQTAELTRDSNGLGCAKLVVFANAPEDNPFMAGAFHGIGEPDCVINVGVSGPGVVNSAVRALQNPALGDISECIKKTAFKITRMGEMVGREVARRLDAQFGVLDLSLAPTPAVGDSVAAILEAMGLESCGTHGTTAALALLNDAVKKGGAMASSSVGGLSGAFIPVSEDQGMIKAVQRGSLSLDKLEAMTCVCSVGLDMIAVPGDTSPATISAIIADEMAIGMINKKTTAVRVITAPGTKVGDMVEFGGLLGSAPVMPVHNFSSETFIARGGKIPAPIQSLTN.

The protein belongs to the UPF0210 family. In terms of assembly, homodimer.

The polypeptide is UPF0210 protein Pcar_2119 (Syntrophotalea carbinolica (strain DSM 2380 / NBRC 103641 / GraBd1) (Pelobacter carbinolicus)).